Consider the following 448-residue polypeptide: Exoglucanase GH7B (448 aa).

Residues 1 to 17 (MSLAVVFLLGFLAVSHG) form the signal peptide. At Gln-18 the chain carries Pyrrolidone carboxylic acid. 2 disulfides stabilise this stretch: Cys-62–Cys-83 and Cys-73–Cys-79. Residues Tyr-97, 119–120 (DI), and Lys-197 each bind substrate. Intrachain disulfides connect Cys-154-Cys-415, Cys-188-Cys-226, Cys-192-Cys-225, Cys-246-Cys-271, Cys-254-Cys-259, and Cys-276-Cys-350. The Nucleophile role is filled by Glu-228. Residues 230-233 (DIWE) and His-244 each bind substrate. The active-site Proton donor/acceptor is the Glu-233. Residues Arg-266 and Asp-274 each contribute to the substrate site. Substrate is bound by residues Trp-396 and Arg-412.

The protein belongs to the glycosyl hydrolase 7 (cellulase C) family. Monomer. Highly expressed in the hepatopancreas (at protein level). Little or no expression detected in the hindgut or the rest of the body (at protein level).

The protein resides in the secreted. The enzyme catalyses Hydrolysis of (1-&gt;4)-beta-D-glucosidic linkages in cellulose and cellotetraose, releasing cellobiose from the non-reducing ends of the chains.. Its function is as follows. Exocellobiohydrolase (CBH) that catalyzes the hydrolysis of 1,4-beta-D-glucosidic bonds in cellulose to release the disaccharide cellobiose. The degradation of cellulose involves an interplay between different cellulolytic enzymes. Hydrolysis starts with endoglucanases (EGs), which cut internal beta-1,4-glucosidic bonds in cellulose to reduce the polymerization degree of the substrate and create new chain ends for exocellobiohydrolases (CBHs). The CBHs release the disaccharide cellobiose from the non-reducing end of the cellulose polymer chain. Finally, beta-1,4-glucosidases hydrolyze the cellobiose and other short cello-oligosaccharides into glucose units. The sequence is that of Exoglucanase GH7B from Limnoria quadripunctata (Gribble).